The sequence spans 919 residues: Phosphoenolpyruvate carboxylase (919 aa).

Residues H138 and K579 contribute to the active site.

This sequence belongs to the PEPCase type 1 family. The cofactor is Mg(2+).

The catalysed reaction is oxaloacetate + phosphate = phosphoenolpyruvate + hydrogencarbonate. In terms of biological role, forms oxaloacetate, a four-carbon dicarboxylic acid source for the tricarboxylic acid cycle. The polypeptide is Phosphoenolpyruvate carboxylase (ppc) (Corynebacterium efficiens (strain DSM 44549 / YS-314 / AJ 12310 / JCM 11189 / NBRC 100395)).